A 182-amino-acid chain; its full sequence is NADH-quinone oxidoreductase subunit B 2 (182 aa).

Cysteine 47, cysteine 48, cysteine 113, and cysteine 142 together coordinate [4Fe-4S] cluster.

This sequence belongs to the complex I 20 kDa subunit family. As to quaternary structure, NDH-1 is composed of 14 different subunits. Subunits NuoB, C, D, E, F, and G constitute the peripheral sector of the complex. It depends on [4Fe-4S] cluster as a cofactor.

Its subcellular location is the cell inner membrane. It catalyses the reaction a quinone + NADH + 5 H(+)(in) = a quinol + NAD(+) + 4 H(+)(out). In terms of biological role, NDH-1 shuttles electrons from NADH, via FMN and iron-sulfur (Fe-S) centers, to quinones in the respiratory chain. The immediate electron acceptor for the enzyme in this species is believed to be ubiquinone. Couples the redox reaction to proton translocation (for every two electrons transferred, four hydrogen ions are translocated across the cytoplasmic membrane), and thus conserves the redox energy in a proton gradient. The chain is NADH-quinone oxidoreductase subunit B 2 from Anaeromyxobacter sp. (strain K).